A 277-amino-acid chain; its full sequence is Sulfur carrier protein FdhD (277 aa).

Cys121 (cysteine persulfide intermediate) is an active-site residue. 260–265 (FCKPGR) serves as a coordination point for Mo-bis(molybdopterin guanine dinucleotide).

Belongs to the FdhD family.

It is found in the cytoplasm. Its function is as follows. Required for formate dehydrogenase (FDH) activity. Acts as a sulfur carrier protein that transfers sulfur from IscS to the molybdenum cofactor prior to its insertion into FDH. This Escherichia coli O6:H1 (strain CFT073 / ATCC 700928 / UPEC) protein is Sulfur carrier protein FdhD.